The following is a 319-amino-acid chain: Epoxyqueuosine reductase (319 aa).

The active-site Proton donor is Asp-128. The 4Fe-4S ferredoxin-type domain occupies 173-202 (EANDPHPNYCGTCTRCLSACPTAALVEPAV). The [4Fe-4S] cluster site is built by Cys-182, Cys-185, Cys-188, Cys-192, Cys-208, Cys-236, Cys-239, and Cys-243.

It belongs to the QueG family. Monomer. It depends on cob(II)alamin as a cofactor. The cofactor is [4Fe-4S] cluster.

It is found in the cytoplasm. It carries out the reaction epoxyqueuosine(34) in tRNA + AH2 = queuosine(34) in tRNA + A + H2O. It participates in tRNA modification; tRNA-queuosine biosynthesis. Its function is as follows. Catalyzes the conversion of epoxyqueuosine (oQ) to queuosine (Q), which is a hypermodified base found in the wobble positions of tRNA(Asp), tRNA(Asn), tRNA(His) and tRNA(Tyr). The chain is Epoxyqueuosine reductase from Gloeobacter violaceus (strain ATCC 29082 / PCC 7421).